Consider the following 200-residue polypeptide: Lipopolysaccharide core heptose(II)-phosphate phosphatase (200 aa).

The signal sequence occupies residues 1–25; that stretch reads MLAFCRSSLKSKKYFIILLALAAIA.

It belongs to the phosphoglycerate mutase family. Ais subfamily.

The protein localises to the periplasm. The protein operates within bacterial outer membrane biogenesis; lipopolysaccharide metabolism. Its function is as follows. Catalyzes the dephosphorylation of heptose(II) of the outer membrane lipopolysaccharide core. This chain is Lipopolysaccharide core heptose(II)-phosphate phosphatase, found in Escherichia coli O6:K15:H31 (strain 536 / UPEC).